The following is a 509-amino-acid chain: ATP synthase subunit alpha (509 aa).

Residue 169–176 (GDRQTGKT) participates in ATP binding.

Belongs to the ATPase alpha/beta chains family. In terms of assembly, F-type ATPases have 2 components, CF(1) - the catalytic core - and CF(0) - the membrane proton channel. CF(1) has five subunits: alpha(3), beta(3), gamma(1), delta(1), epsilon(1). CF(0) has three main subunits: a(1), b(2) and c(9-12). The alpha and beta chains form an alternating ring which encloses part of the gamma chain. CF(1) is attached to CF(0) by a central stalk formed by the gamma and epsilon chains, while a peripheral stalk is formed by the delta and b chains.

Its subcellular location is the cell inner membrane. The catalysed reaction is ATP + H2O + 4 H(+)(in) = ADP + phosphate + 5 H(+)(out). Produces ATP from ADP in the presence of a proton gradient across the membrane. The alpha chain is a regulatory subunit. The polypeptide is ATP synthase subunit alpha (Parvibaculum lavamentivorans (strain DS-1 / DSM 13023 / NCIMB 13966)).